The following is a 453-amino-acid chain: Chromosomal replication initiator protein DnaA (453 aa).

The tract at residues 1–73 is domain I, interacts with DnaA modulators; the sequence is MSKEEIWDKV…ADLIEKAIGT (73 aa). Residues 73–114 are domain II; that stretch reads TKLMPNFVIQEDLTEDKQVKDSAKAKSEAKPDVQAPQNSSED. The segment covering 91–103 has biased composition (basic and acidic residues); it reads VKDSAKAKSEAKP. The interval 91 to 113 is disordered; the sequence is VKDSAKAKSEAKPDVQAPQNSSE. The segment at 115–331 is domain III, AAA+ region; the sequence is QFNVHNTFET…GALTRVIAYS (217 aa). G159, G161, K162, and T163 together coordinate ATP. The tract at residues 332-453 is domain IV, binds dsDNA; sequence RLQNEAITTE…ENLEKEIRNQ (122 aa).

The protein belongs to the DnaA family. In terms of assembly, oligomerizes as a right-handed, spiral filament on DNA at oriC.

It localises to the cytoplasm. Functionally, plays an essential role in the initiation and regulation of chromosomal replication. ATP-DnaA binds to the origin of replication (oriC) to initiate formation of the DNA replication initiation complex once per cell cycle. Binds the DnaA box (a 9 base pair repeat at the origin) and separates the double-stranded (ds)DNA. Forms a right-handed helical filament on oriC DNA; dsDNA binds to the exterior of the filament while single-stranded (ss)DNA is stabiized in the filament's interior. The ATP-DnaA-oriC complex binds and stabilizes one strand of the AT-rich DNA unwinding element (DUE), permitting loading of DNA polymerase. After initiation quickly degrades to an ADP-DnaA complex that is not apt for DNA replication. Binds acidic phospholipids. The protein is Chromosomal replication initiator protein DnaA of Staphylococcus carnosus (strain TM300).